The sequence spans 322 residues: Replication factor C small subunit (322 aa).

ATP is bound at residue 50 to 57 (GPAGTGKT).

Belongs to the activator 1 small subunits family. RfcS subfamily. Heteromultimer composed of small subunits (RfcS) and large subunits (RfcL).

Part of the RFC clamp loader complex which loads the PCNA sliding clamp onto DNA. This Halobacterium salinarum (strain ATCC 700922 / JCM 11081 / NRC-1) (Halobacterium halobium) protein is Replication factor C small subunit.